Here is an 855-residue protein sequence, read N- to C-terminus: E3 ubiquitin-protein ligase TRIM71 (855 aa).

A2 is subject to N-acetylalanine. The RING-type zinc finger occupies 12 to 94; sequence CLLCKEMCGS…ALKLRCPVCD (83 aa). Over residues 26–42 the composition is skewed to low complexity; that stretch reads SSSSSASSSSSQTSTSS. 2 disordered regions span residues 26-48 and 126-177; these read SSSS…GGGP and ADEP…SPGS. A compositionally biased stretch (gly residues) spans 135–145; sequence RAGGGPGGAGG. A compositionally biased stretch (basic residues) spans 147-157; it reads SNHRHHAHHPA. The B box-type 1; atypical zinc finger occupies 181-228; the sequence is RRPHGCSSCDEGNAASSRCLDCQEHLCDNCVRAHQRVRLTKDHYIERG. Residues 260–301 form a B box-type 2 zinc finger; sequence ERLGFCQHHDDEVLHLYCDTCSVPICRECTLGRHGGHSFAYL. 4 residues coordinate Zn(2+): C265, H268, C288, and H293. Residues 378-414 are a coiled coil; that stretch reads QVKAKSLYLQVEKLRQNLNKLESTISAVQQVLEEGRA. Residues 466–567 form a Filamin repeat; the sequence is SSGAFAPLTK…IENSPFKVVV (102 aa). NHL repeat units lie at residues 580 to 623, 627 to 670, 674 to 717, 721 to 764, 768 to 811, and 815 to 855; these read VLSF…FKPC, HHKF…FTFE, LLKF…FGPD, LNKY…IHPD, ARFL…FEAN, and LCKF…ILIF.

The protein belongs to the TRIM/RBCC family. Interacts (via NHL repeats) with AGO2; the interaction increases in presence of RNA. Interacts with HSP90AA1. Interacts (via NHL repeats) with MOV10, PABPC1, PUM1, PUM2, STAU2, XRN1 and XRN2 in an RNA-dependent manner. Interacts with SHCBP1; leading to enhance its stability. Autoubiquitinated.

It is found in the cytoplasm. It localises to the P-body. It carries out the reaction S-ubiquitinyl-[E2 ubiquitin-conjugating enzyme]-L-cysteine + [acceptor protein]-L-lysine = [E2 ubiquitin-conjugating enzyme]-L-cysteine + N(6)-ubiquitinyl-[acceptor protein]-L-lysine.. It functions in the pathway protein modification; protein ubiquitination. E3 ubiquitin-protein ligase that cooperates with the microRNAs (miRNAs) machinery and promotes embryonic stem cells proliferation and maintenance. Binds to miRNAs and associates with AGO2, participating in post-transcriptional repression of transcripts such as CDKN1A. In addition, participates in post-transcriptional mRNA repression in a miRNA independent mechanism. Facilitates the G1-S transition to promote rapid embryonic stem cell self-renewal by repressing CDKN1A expression. Required to maintain proliferation and prevent premature differentiation of neural progenitor cells during early neural development: positively regulates FGF signaling by controlling the stability of SHCBP1. Specific regulator of miRNA biogenesis. Binds to miRNA MIR29A hairpin and postranscriptionally modulates MIR29A levels, which indirectly regulates TET proteins expression. The sequence is that of E3 ubiquitin-protein ligase TRIM71 (Trim71) from Rattus norvegicus (Rat).